The following is a 480-amino-acid chain: uncharacterized protein (480 aa).

Positions 16-46 (CDRCRRRKIRCTGSDIPGQPCLACQKAHADC) form a DNA-binding region, zn(2)-C6 fungal-type. Residues 298 to 307 (SFGASVSPKS) are compositionally biased toward low complexity. Positions 298-325 (SFGASVSPKSTPGSNSTGAAVDTNSVHS) are disordered. The segment covering 308 to 325 (TPGSNSTGAAVDTNSVHS) has biased composition (polar residues).

Its subcellular location is the cytoplasm. It is found in the nucleus. This is an uncharacterized protein from Schizosaccharomyces pombe (strain 972 / ATCC 24843) (Fission yeast).